The sequence spans 245 residues: Adapter protein MecA (245 aa).

It belongs to the MecA family. In terms of assembly, homodimer.

Functionally, enables the recognition and targeting of unfolded and aggregated proteins to the ClpC protease or to other proteins involved in proteolysis. In Streptococcus pneumoniae (strain Hungary19A-6), this protein is Adapter protein MecA.